A 205-amino-acid chain; its full sequence is Probable GTP-binding protein EngB (205 aa).

Residues 27 to 201 (QGMEVAFAGR…QNKLNAWFSG (175 aa)) enclose the EngB-type G domain. GTP-binding positions include 35–42 (GRSNAGKS), 62–66 (GRTQL), 80–83 (DLPG), 147–150 (TKVD), and 180–182 (FSS). Mg(2+) contacts are provided by S42 and T64.

This sequence belongs to the TRAFAC class TrmE-Era-EngA-EngB-Septin-like GTPase superfamily. EngB GTPase family. Mg(2+) serves as cofactor.

Functionally, necessary for normal cell division and for the maintenance of normal septation. The sequence is that of Probable GTP-binding protein EngB from Hamiltonella defensa subsp. Acyrthosiphon pisum (strain 5AT).